Consider the following 386-residue polypeptide: Delta(7)-sterol 5(6)-desaturase (386 aa).

The next 3 helical transmembrane spans lie at 119 to 139 (VLSL…IVAY), 172 to 192 (IPVM…GYSF), and 206 to 226 (AILW…YFLH). The region spanning 214–337 (FILFTDCGIY…FTTLWDRLGN (124 aa)) is the Fatty acid hydroxylase domain. The Histidine box-1 motif lies at 226–230 (HRWLH). Positions 239-243 (HKPHH) match the Histidine box-2 motif. The chain crosses the membrane as a helical span at residues 272–292 (PLLFPLHKVLYLLLFTFVNFW). The short motif at 314-318 (HTVHH) is the Histidine box-3 element.

Belongs to the sterol desaturase family. Fe cation is required as a cofactor.

It is found in the endoplasmic reticulum membrane. It carries out the reaction a Delta(7)-sterol + 2 Fe(II)-[cytochrome b5] + O2 + 2 H(+) = a Delta(5),Delta(7)-sterol + 2 Fe(III)-[cytochrome b5] + 2 H2O. It functions in the pathway steroid metabolism; ergosterol biosynthesis; ergosterol from zymosterol: step 3/5. Functionally, catalyzes the introduction of a C-5 double bond in the B ring of ergosterol. May contribute to the regulation of ergosterol biosynthesis. The protein is Delta(7)-sterol 5(6)-desaturase (ERG3) of Candida dubliniensis (strain CD36 / ATCC MYA-646 / CBS 7987 / NCPF 3949 / NRRL Y-17841) (Yeast).